Here is a 651-residue protein sequence, read N- to C-terminus: Probable potassium transport system protein Kup 3 (651 aa).

12 helical membrane-spanning segments follow: residues phenylalanine 38 to leucine 58, valine 77 to lysine 97, leucine 129 to threonine 149, proline 166 to valine 186, phenylalanine 197 to isoleucine 217, isoleucine 242 to alanine 262, tryptophan 276 to leucine 296, leucine 314 to isoleucine 334, isoleucine 366 to phenylalanine 386, tyrosine 396 to tryptophan 416, tryptophan 421 to phenylalanine 441, and leucine 448 to threonine 468.

It belongs to the HAK/KUP transporter (TC 2.A.72) family.

Its subcellular location is the cell inner membrane. The enzyme catalyses K(+)(in) + H(+)(in) = K(+)(out) + H(+)(out). Its function is as follows. Transport of potassium into the cell. Likely operates as a K(+):H(+) symporter. The protein is Probable potassium transport system protein Kup 3 of Rhodopseudomonas palustris (strain ATCC BAA-98 / CGA009).